The primary structure comprises 138 residues: Thyrotropin subunit beta (138 aa).

The N-terminal stretch at 1–20 (MNAVVLFSVLFALACGQVSS) is a signal peptide. Intrachain disulfides connect C22/C72, C36/C87, C39/C125, C47/C103, C51/C105, and C108/C115. An N-linked (GlcNAc...) asparagine glycan is attached at N43. A propeptide spanning residues 133–138 (LGGFSG) is cleaved from the precursor.

Belongs to the glycoprotein hormones subunit beta family. As to quaternary structure, heterodimer of a common alpha chain and a unique beta chain which confers biological specificity to thyrotropin, lutropin, follitropin and gonadotropin.

It localises to the secreted. Functionally, indispensable for the control of thyroid structure and metabolism. The sequence is that of Thyrotropin subunit beta (Tshb) from Rattus norvegicus (Rat).